The following is a 69-amino-acid chain: Large ribosomal subunit protein bL31 (69 aa).

Zn(2+) is bound by residues cysteine 17, cysteine 19, cysteine 37, and cysteine 40.

The protein belongs to the bacterial ribosomal protein bL31 family. Type A subfamily. Part of the 50S ribosomal subunit. It depends on Zn(2+) as a cofactor.

In terms of biological role, binds the 23S rRNA. In Caldanaerobacter subterraneus subsp. tengcongensis (strain DSM 15242 / JCM 11007 / NBRC 100824 / MB4) (Thermoanaerobacter tengcongensis), this protein is Large ribosomal subunit protein bL31.